Consider the following 381-residue polypeptide: Dual specificity protein phosphatase 6 (381 aa).

The 119-residue stretch at glycine 30–glutamate 148 folds into the Rhodanese domain. The disordered stretch occupies residues serine 176–glutamine 203. The span at asparagine 189–glutamine 203 shows a compositional bias: polar residues. Positions phenylalanine 206 to leucine 349 constitute a Tyrosine-protein phosphatase domain. The active-site Phosphocysteine intermediate is the cysteine 293.

This sequence belongs to the protein-tyrosine phosphatase family. Non-receptor class dual specificity subfamily. Interacts with MAPK1/ERK2. Post-translationally, ubiquitinated by the SCF(FBXO31) complex, leading to its proteasomal degradation.

It localises to the cytoplasm. It catalyses the reaction O-phospho-L-tyrosyl-[protein] + H2O = L-tyrosyl-[protein] + phosphate. It carries out the reaction O-phospho-L-seryl-[protein] + H2O = L-seryl-[protein] + phosphate. The catalysed reaction is O-phospho-L-threonyl-[protein] + H2O = L-threonyl-[protein] + phosphate. Functionally, dual specificity protein phosphatase, which mediates dephosphorylation and inactivation of MAP kinases. Has a specificity for the ERK family. Plays an important role in alleviating acute postoperative pain. Necessary for the normal dephosphorylation of the long-lasting phosphorylated forms of spinal MAPK1/3 and MAP kinase p38 induced by peripheral surgery, which drives the resolution of acute postoperative allodynia. Also important for dephosphorylation of MAPK1/3 in local wound tissue, which further contributes to resolution of acute pain. The sequence is that of Dual specificity protein phosphatase 6 (Dusp6) from Mus musculus (Mouse).